Consider the following 271-residue polypeptide: Murein DD-endopeptidase MepH (271 aa).

An N-terminal signal peptide occupies residues 1–27 (MARINRISITLCALLFTTLPLTPMAHA). The tract at residues 27-102 (ASKQARESSA…KHAVNKTASA (76 aa)) is disordered. Over residues 55–64 (KTQKTAKKAA) the composition is skewed to basic residues. The segment covering 65–86 (SKSTTKSKTASSVKKSSITASK) has biased composition (low complexity). The NlpC/P60 domain maps to 138–265 (QKATKVAMNK…RHYVGARRVM (128 aa)). Cys169 serves as the catalytic Nucleophile. The active-site Proton acceptor is the His224. The active site involves Gln236.

This sequence belongs to the peptidase C40 family.

It participates in cell wall biogenesis; cell wall polysaccharide biosynthesis. Its function is as follows. A murein DD-endopeptidase with specificity for D-Ala-meso-diaminopimelic acid (mDAP) cross-links. Its role is probably to cleave D-Ala-mDAP cross-links to allow insertion of new glycans and thus cell wall expansion. Functionally redundant with MepM and MepH. Partially suppresses an mepS disruption mutant. This is Murein DD-endopeptidase MepH (mepH) from Escherichia coli (strain K12).